The sequence spans 267 residues: Apolipoprotein A-I (267 aa).

A signal peptide spans 1-18 (MKAAVLTLAVLFLTGSQA). 2 repeat units span residues 68–89 (LKLLDNWDSMTSTFSKLREQLG) and 90–111 (PVTQEFWDNLEKETEGLRQEMS). The segment at 68-267 (LKLLDNWDSM…EEYTKKLNTQ (200 aa)) is 10 X approximate tandem repeats. A Methionine sulfoxide modification is found at methionine 110. Residues 112–122 (KDLEEVKAKVQ) form a 3; half-length repeat. 5 consecutive repeat copies span residues 123-144 (PYLDDFQKKWQEEMELYRQKVE), 145-166 (PLRAELQEGARQKLHELHEKLS), 167-188 (PLGEEMRDRARAHVDALRTHLA), 189-210 (PYTDELRQRLAARLEALKENGG), and 211-232 (ARLAEYHAKASEHLSTLSEKAK). Methionine 136 is subject to Methionine sulfoxide. A 9; half-length repeat occupies 233 to 243 (PALEDLRQGLL). Repeat unit 10 spans residues 244 to 267 (PVLESFKVSFLSALEEYTKKLNTQ).

Belongs to the apolipoprotein A1/A4/E family. Homodimer. Interacts with APOA1BP and CLU. Component of a sperm activating protein complex (SPAP), consisting of APOA1, an immunoglobulin heavy chain, an immunoglobulin light chain and albumin. Interacts with NDRG1. Interacts with SCGB3A2. Interacts with NAXE and YJEFN3. Post-translationally, glycosylated. Palmitoylated. In terms of tissue distribution, major protein of plasma HDL, also found in chylomicrons.

It localises to the secreted. Its function is as follows. Participates in the reverse transport of cholesterol from tissues to the liver for excretion by promoting cholesterol efflux from tissues and by acting as a cofactor for the lecithin cholesterol acyltransferase (LCAT). As part of the SPAP complex, activates spermatozoa motility. The chain is Apolipoprotein A-I (APOA1) from Pongo abelii (Sumatran orangutan).